We begin with the raw amino-acid sequence, 919 residues long: Protein phosphatase 1 regulatory subunit 37 (919 aa).

LRR repeat units lie at residues 340–361, 368–388, 396–417, 425–445, 454–474, and 482–502; these read SLQYLDARNTPLLDHSAPFVAR, SLTVLHLENSGISGRPLMLLA, NLRELYLAENKLNGLQDSAQLG, NIQILDLRNNHILDSGLAYVC, GLVTLVLWNNQLTHNGMGYLA, and SLETLNLGHNAVGNEGVHKLK. 2 disordered regions span residues 626–716 and 790–866; these read ATED…TIPS and APSQ…APLP. A compositionally biased stretch (acidic residues) spans 631-640; sequence THEEEEEEEA. A compositionally biased stretch (basic and acidic residues) spans 641–658; that stretch reads SPLKKIEEETTDALKDAT. Positions 677–690 are enriched in acidic residues; it reads PQDDSDSDTEDEET. Residues 691–701 show a composition bias toward low complexity; the sequence is PTNTSLTSTSP. Polar residues-rich tracts occupy residues 791–801 and 811–837; these read PSQTQNSTQPT and DAQQEDSVSTSTPSLDANIDQTQLTES. Residues 833–861 adopt a coiled-coil conformation; sequence QLTESVSEEEQKKAETLNNEADINEDANT.

This sequence belongs to the PPP1R37 family.

In terms of biological role, may inhibit phosphatase activity of protein phosphatase 1 (PP1) complexes. In Danio rerio (Zebrafish), this protein is Protein phosphatase 1 regulatory subunit 37 (ppp1r37).